Consider the following 95-residue polypeptide: Large ribosomal subunit protein bL25 (95 aa).

The protein belongs to the bacterial ribosomal protein bL25 family. As to quaternary structure, part of the 50S ribosomal subunit; part of the 5S rRNA/L5/L18/L25 subcomplex. Contacts the 5S rRNA. Binds to the 5S rRNA independently of L5 and L18.

Functionally, this is one of the proteins that binds to the 5S RNA in the ribosome where it forms part of the central protuberance. This Haemophilus influenzae (strain ATCC 51907 / DSM 11121 / KW20 / Rd) protein is Large ribosomal subunit protein bL25.